A 2462-amino-acid polypeptide reads, in one-letter code: MGQTLCDFVRQQEVVPANRARKGSAISEDGTTSCTTQPQRNTSISSEEQTVQGANIQKSGHRSFNRSASSRQKPNPTSKLKDTLNRKPTCKQGTLSAHTSTSSTTSIQSSPIEPASSLPTLNTTPTPPAASKSNLFVRVLRRFSNNTLPGKTASSPKNVDDVPKVNDNNNGDLGKQQSTDVEVLCSQDNQSREQNEDEMDSKIEPADAISNQKAGLTSGKPKKDKSVKGTSQAVVSDTKKMEARKSSSDTVIEPLIKQQAPLHSSKTTPTTLTANFVQNIRFVRKNVEQSGRNTNPLQFVELETEFPRDYDDNIEMLSREAEHLEEQFRTPTRSNATDATSHHVAGIIDNIITEASRSLTIEKTEDDVPLKSSTKHSSGVKRVGFQVEDKDDTEVQSEKQAKSFDDITKKAESSEASAEEAAVTGSSTDASASPLPSTSLVSTTSSATSITKSKSDEDDDPVAMSPCGRFFKYDKEVGRGSFKTVYRGLDTLTGVPVAWCELLDKQVKKSERTRFREEADMLKKLQHPNIVRFYTYWEFPIGRKKNIVLVTELMLSGTLKSYLKRFKKIHPKVLKSWCRQILKGLNFLHTRQFPIIHRDLKCDNIFITGTTGSVKIGDLGLATLKNRSHAKSVIGTPEFMAPEMYEEHYDESVDVYAFGMCMLEMAISEYPYSECKGPAQIYKKVISGIKPAALAKVEDPNVRDIIERCIELKKEDRPSCNELLESEFFDEDIGIRVEPTASEQFLSDPSISIIEFRLRFMDPKKRSSRHKENEAIQFEYNIRHDEYEQIAQEMMKENIISEDDSRAVARLLKVQVVSLLKERAQRQTQIKLQNEKSRLEKLALQKQRESLPTNVDEDEEEEEESEDEEDGVKWNQRLQLRYDLLNTDSETSLALSTNSVEPQQLSTRSNTSIPNSGIQQPVQVPGQVPVSQLISVQPQAIPSPAIPMQQKPTVHYIQPPQLASYQNSNASMQEMTNNQVISPTGSQQMQQQQPVVAPTVNHQVMPQQQVNQQQQQPQMMQQIPQQVQVQQPQTVLPPQPHEQQPQQQQQPLQQQLQQLMHTNVQAPDLTQQQQMAQQQAQQYFQQQQQQPQQAVNMQQAYAMQQAGQQQQLSQPLQIQQQILQQQQVAVSHQQQIMQQQLAQHQLQQLQQQQLQQQQLQQQQQIQQQQLQQQQLQQQQFVQQYAQAMPQQQHQQLVTGSQVMAPHQHQQPIQIPVQMQVPPTSVAPPIQHTYNQQGGQVTLSDAQQQQHPGFSAVPQQAAPFIQQPTQQPIQLSMPLEQQLQQLLHSQPAQQQQAMSQQQQQPLVQQQQLPLVQQQPPLVQQQQPLVQHQQPSVQHQQPLVQQPQQQQPQPQNQQPQPQTQQTHVVQQQPPQQQPAVEQISQISSQVPVQQENLQPIQVNKDANVATDAMSLNSAHGALEPAPKTEPQNSADAEKQQKQTGTGTRSQKPRRSNRSGNERIPKLSVTSVDEGSVINCHMENKLKTITFKFDIGDVNPVEIANKLIAQDLLSNCQSTVFVEMINEIVDQVKQNPNQIPIPTNYRRNIEKVRHASLTRQRSTFRSHQRHRSRDETASDITKMFEPTIHGVETLPSGGGGAEQSNCNLTLEARSHLSNIPNAKEPQLNVSTPPTTTSTMSSSSTASRDAPNSSNDVTIGSGSVSRKTSTASEYTSLSIDYMPDSNITPTGPEPPLDDGKDKKPCSLAIARMQKLLESAGNGAPRSLNLPLNRHLKIQEDLKHTRSLDDLTAVKITFDMPNKAALDTSENAQQATEAEAEKPKDKSGQAVGNQGTGAANTLEQLKIELENITHAHAFASAVVASINNRAPHQASPAMSSLKATSGQPQTQEITKPNNGAGPSVPSVGQNTPTAALTSARGSGSSVYNSRRTSIDNSVGSDMHLHTATNLEGTVSNPDPIPTEASVGITIATGHEKQLSKQPSLEKPSATSILTNNSDPPQRNPSNGSINQNSIADLEKKLAALRNTENTEESATATLSVVPKQVEEVVNPSARKISRFSVSRVQEQKTSTGVEEPAQGQLKIDLQVAGPGGQVQTNNSVQNGSVVNTPTEVISSPIQNVPLAINGIQLMYQQPQQIHQLPGGTSTTTSGAGTQCIVVPQVVNQNGTHVQQPSNLQPQQQSVHPNMTQQPQQTPLNGHPSMVNTLQQQPPQQSLPMQTIQSQQQQHNQMPIISQQQQQQILMQQQQQQGSQQGSQQFNLPGTQQTHPQHQFIQSQPNQLHSLPPQVVSMAQGNLPHQLPPMQTMGAQQQMISQQQHQLQMQSHMHQQNVPGMYNQQTGARVAAPQNFAGAVPNHLLQQSPLMASQQPAQPMQHVMQPIFNATSGEVTEEPVSLAATHPHLLPSDIQSDIKHNLDSLVNQLCNTRLGTNQHQRLLLLRQRQLIEEDELRLKHYVEYEKFQKALRQSISTNVPANAAYYSAAAAQLPTNLAAPAAPSSSNPTSTSSANT.

3 disordered regions span residues 18 to 133 (NRAR…ASKS), 146 to 248 (NTLP…KSSS), and 365 to 461 (EDDV…DDDP). 2 stretches are compositionally biased toward polar residues: residues 29 to 58 (DGTT…NIQK) and 65 to 78 (NRSA…NPTS). Residues 94–124 (TLSAHTSTSSTTSIQSSPIEPASSLPTLNTT) show a composition bias toward low complexity. Polar residues predominate over residues 146–155 (NTLPGKTASS). Composition is skewed to basic and acidic residues over residues 190-205 (QSRE…KIEP), 237-247 (DTKKMEARKSS), and 396-413 (QSEK…KAES). Positions 414–452 (SEASAEEAAVTGSSTDASASPLPSTSLVSTTSSATSITK) are enriched in low complexity. A Protein kinase domain is found at 471 to 729 (FKYDKEVGRG…CNELLESEFF (259 aa)). ATP-binding positions include serine 481, 551–554 (TELM), and lysine 601. Catalysis depends on aspartate 618, which acts as the Proton acceptor. 2 positions are modified to phosphoserine; by autocatalysis: serine 628 and serine 632. Disordered stretches follow at residues 844-873 (LQKQ…DGVK), 893-923 (LALS…QPVQ), and 1006-1055 (PQQQ…LQQQ). A compositionally biased stretch (acidic residues) spans 855–870 (VDEDEEEEEESEDEED). Residues 893–918 (LALSTNSVEPQQLSTRSNTSIPNSGI) are compositionally biased toward polar residues. Low complexity-rich tracts occupy residues 1006-1034 (PQQQ…QPQT) and 1041-1055 (HEQQ…LQQQ). The stretch at 1142-1178 (AQHQLQQLQQQQLQQQQLQQQQQIQQQQLQQQQLQQQ) forms a coiled coil. Residues 1236 to 1251 (QGGQVTLSDAQQQQHP) are compositionally biased toward polar residues. 9 disordered regions span residues 1236-1256 (QGGQ…FSAV), 1322-1382 (QQQQ…EQIS), 1418-1465 (GALE…PKLS), 1554-1578 (LTRQ…SDIT), 1615-1699 (NIPN…KDKK), 1762-1790 (DTSE…GNQG), 1828-1895 (QASP…SVGS), 1929-1966 (HEKQ…SINQ), and 2122-2229 (THVQ…FIQS). Over residues 1559 to 1568 (STFRSHQRHR) the composition is skewed to basic residues. Residues 1627–1641 (STPPTTTSTMSSSST) show a composition bias toward low complexity. Residues 1642 to 1674 (ASRDAPNSSNDVTIGSGSVSRKTSTASEYTSLS) show a composition bias toward polar residues. Composition is skewed to polar residues over residues 1828–1852 (QASP…TKPN), 1861–1894 (SVGQ…NSVG), and 1943–1966 (SATS…SINQ). Residues 2125–2136 (QQPSNLQPQQQS) show a composition bias toward low complexity. The segment covering 2137 to 2160 (VHPNMTQQPQQTPLNGHPSMVNTL) has biased composition (polar residues). Low complexity predominate over residues 2161-2211 (QQQPPQQSLPMQTIQSQQQQHNQMPIISQQQQQQILMQQQQQQGSQQGSQQ). The segment covering 2212–2229 (FNLPGTQQTHPQHQFIQS) has biased composition (polar residues).

This sequence belongs to the protein kinase superfamily. Ser/Thr protein kinase family. WNK subfamily. The cofactor is Mg(2+). Post-translationally, autophosphorylated. Autophosphorylation at Ser-628 and Ser-632 promotes its activity.

It is found in the cytoplasm. It carries out the reaction L-seryl-[protein] + ATP = O-phospho-L-seryl-[protein] + ADP + H(+). The catalysed reaction is L-threonyl-[protein] + ATP = O-phospho-L-threonyl-[protein] + ADP + H(+). Activated in response to hyperosmotic stress: cell shrinkage promotes formation of a membraneless compartment that concentrates wnk-1 with its downstrem substrates. Activation requires autophosphorylation. Autophosphorylation and subsequent activation is inhibited by increases in intracellular Cl(-) or K(+). Serine/threonine-protein kinase component of the WNK-SPAK/OSR1 kinase cascade, which plays an important role in the regulation of electrolyte homeostasis and regulatory volume increase in response to hyperosmotic stress. Wnk mediates regulatory volume increase in response to hyperosmotic stress by acting as a molecular crowding sensor, which senses cell shrinkage and mediates formation of a membraneless compartment by undergoing liquid-liquid phase separation. The membraneless compartment concentrates Wnk with its substrate Fray, promoting Wnk-dependent phosphorylation and activation of downstream kinase Fray. Following activation, Fray catalyzes phosphorylation of ion cotransporters Ncc69 and Irk1, regulating their activity. Phosphorylation of Na-K-Cl cotransporter Ncc69 promotes its activation and ion influx. Involved in circadian rhythms in small ventral lateral (sLNv) pacemaker neurons: in the morning, Wnk activity is repressed by high levels of intracellular chloride; in contrast Wnk activation in the evening promotes the activation of the inwardly rectifying potassium channel Irk1 via Fray. Acts as a positive regulator of the canonical Wnt signaling pathway during wing disk development. The chain is Serine/threonine-protein kinase Wnk from Drosophila melanogaster (Fruit fly).